We begin with the raw amino-acid sequence, 510 residues long: Bifunctional purine biosynthesis protein PurH (510 aa).

The region spanning 1–145 is the MGS-like domain; sequence MTKRALLSVS…KNFAAVLPIV (145 aa).

The protein belongs to the PurH family.

It catalyses the reaction (6R)-10-formyltetrahydrofolate + 5-amino-1-(5-phospho-beta-D-ribosyl)imidazole-4-carboxamide = 5-formamido-1-(5-phospho-D-ribosyl)imidazole-4-carboxamide + (6S)-5,6,7,8-tetrahydrofolate. It carries out the reaction IMP + H2O = 5-formamido-1-(5-phospho-D-ribosyl)imidazole-4-carboxamide. It functions in the pathway purine metabolism; IMP biosynthesis via de novo pathway; 5-formamido-1-(5-phospho-D-ribosyl)imidazole-4-carboxamide from 5-amino-1-(5-phospho-D-ribosyl)imidazole-4-carboxamide (10-formyl THF route): step 1/1. It participates in purine metabolism; IMP biosynthesis via de novo pathway; IMP from 5-formamido-1-(5-phospho-D-ribosyl)imidazole-4-carboxamide: step 1/1. In Lactiplantibacillus plantarum (strain ATCC BAA-793 / NCIMB 8826 / WCFS1) (Lactobacillus plantarum), this protein is Bifunctional purine biosynthesis protein PurH.